A 535-amino-acid chain; its full sequence is 4-hydroxy-3-methylbut-2-enyl diphosphate reductase, apicoplast (535 aa).

Cys-231 is a [4Fe-4S] cluster binding site. (2E)-4-hydroxy-3-methylbut-2-enyl diphosphate contacts are provided by His-260 and His-293. The dimethylallyl diphosphate site is built by His-260 and His-293. Positions 260 and 293 each coordinate isopentenyl diphosphate. Cys-315 lines the [4Fe-4S] cluster pocket. Residue His-343 participates in (2E)-4-hydroxy-3-methylbut-2-enyl diphosphate binding. Residue His-343 participates in dimethylallyl diphosphate binding. An isopentenyl diphosphate-binding site is contributed by His-343. Glu-345 functions as the Proton donor in the catalytic mechanism. (2E)-4-hydroxy-3-methylbut-2-enyl diphosphate is bound at residue Thr-383. A [4Fe-4S] cluster-binding site is contributed by Cys-413. The (2E)-4-hydroxy-3-methylbut-2-enyl diphosphate site is built by Ser-441, Ser-442, Asn-443, and Ser-485. Dimethylallyl diphosphate-binding residues include Ser-441, Ser-442, Asn-443, and Ser-485. Isopentenyl diphosphate is bound by residues Ser-441, Ser-442, Asn-443, and Ser-485.

It belongs to the IspH family. Interacts with Fd/ferredoxin. [4Fe-4S] cluster is required as a cofactor.

It localises to the plastid. The protein resides in the apicoplast. The catalysed reaction is dimethylallyl diphosphate + 2 oxidized [2Fe-2S]-[ferredoxin] + H2O = (2E)-4-hydroxy-3-methylbut-2-enyl diphosphate + 2 reduced [2Fe-2S]-[ferredoxin] + 2 H(+). It catalyses the reaction isopentenyl diphosphate + 2 oxidized [2Fe-2S]-[ferredoxin] + H2O = (2E)-4-hydroxy-3-methylbut-2-enyl diphosphate + 2 reduced [2Fe-2S]-[ferredoxin] + 2 H(+). It participates in isoprenoid biosynthesis; dimethylallyl diphosphate biosynthesis; dimethylallyl diphosphate from (2E)-4-hydroxy-3-methylbutenyl diphosphate: step 1/1. Its pathway is isoprenoid biosynthesis; isopentenyl diphosphate biosynthesis via DXP pathway; isopentenyl diphosphate from 1-deoxy-D-xylulose 5-phosphate: step 6/6. In terms of biological role, catalyzes the conversion of 1-hydroxy-2-methyl-2-(E)-butenyl 4-diphosphate (HMBPP) into a mixture of isopentenyl diphosphate (IPP) and dimethylallyl diphosphate (DMAPP). Acts in the terminal step of the DOXP/MEP pathway for isoprenoid precursor biosynthesis. The chain is 4-hydroxy-3-methylbut-2-enyl diphosphate reductase, apicoplast from Plasmodium falciparum (isolate 3D7).